Here is a 667-residue protein sequence, read N- to C-terminus: DNA ligase (667 aa).

NAD(+) contacts are provided by residues 32–36 (DKDYD) and 80–81 (SL). Lys-121 acts as the N6-AMP-lysine intermediate in catalysis. 3 residues coordinate NAD(+): Arg-143, Glu-178, and Lys-314. The Zn(2+) site is built by Cys-407, Cys-410, Cys-423, and Cys-429. In terms of domain architecture, BRCT spans 587–667 (IVESIFKDKT…EFEKMLGRES (81 aa)).

The protein belongs to the NAD-dependent DNA ligase family. LigA subfamily. The cofactor is Mg(2+). Mn(2+) is required as a cofactor.

The catalysed reaction is NAD(+) + (deoxyribonucleotide)n-3'-hydroxyl + 5'-phospho-(deoxyribonucleotide)m = (deoxyribonucleotide)n+m + AMP + beta-nicotinamide D-nucleotide.. Functionally, DNA ligase that catalyzes the formation of phosphodiester linkages between 5'-phosphoryl and 3'-hydroxyl groups in double-stranded DNA using NAD as a coenzyme and as the energy source for the reaction. It is essential for DNA replication and repair of damaged DNA. This is DNA ligase from Clostridium botulinum (strain Alaska E43 / Type E3).